Reading from the N-terminus, the 70-residue chain is DNA-directed RNA polymerase subunit omega (70 aa).

It belongs to the RNA polymerase subunit omega family. The RNAP catalytic core consists of 2 alpha, 1 beta, 1 beta' and 1 omega subunit. When a sigma factor is associated with the core the holoenzyme is formed, which can initiate transcription.

It carries out the reaction RNA(n) + a ribonucleoside 5'-triphosphate = RNA(n+1) + diphosphate. Functionally, promotes RNA polymerase assembly. Latches the N- and C-terminal regions of the beta' subunit thereby facilitating its interaction with the beta and alpha subunits. The chain is DNA-directed RNA polymerase subunit omega from Clostridium perfringens (strain ATCC 13124 / DSM 756 / JCM 1290 / NCIMB 6125 / NCTC 8237 / Type A).